The chain runs to 716 residues: Protein C-mannosyl-transferase DPY19L3 (716 aa).

Residues 1 to 43 (MMYIRQRKETKPIEVSEDFPSPKEDVKLEKKLPSGCASGRFWK) lie on the Cytoplasmic side of the membrane. A helical membrane pass occupies residues 44–64 (ILSSAVGGTVALCIGLLTSVY). Residues 65-154 (LATLHENDLW…RVLPIQKYLE (90 aa)) are Lumenal-facing. N-linked (GlcNAc...) asparagine glycosylation is present at Asn-118. A helical membrane pass occupies residues 155 to 182 (PVYFYIYTLFGLQAVYVTALYITSWLLS). Residues 183–184 (GT) lie on the Cytoplasmic side of the membrane. An intramembrane region (name=3) is located at residues 185-197 (WLSGLLAALWYVT). The Cytoplasmic portion of the chain corresponds to 198-215 (NRIDTTRVEFTIPLRENW). An intramembrane region (name=4) is located at residues 216–230 (ALPFFAIQIAAITYF). The Cytoplasmic portion of the chain corresponds to 231–239 (LRPNLQPLS). A helical membrane pass occupies residues 240–256 (ERLTLLAIFVSTFLFSL). Topologically, residues 257–262 (TWQFNQ) are lumenal. The helical transmembrane segment at 263 to 279 (FMMLLQALVLFILDSLD) threads the bilayer. Over 280–289 (MLPAMKATWL) the chain is Cytoplasmic. Residues 290–306 (YGIQISCLLLVCTLQFF) traverse the membrane as a helical segment. At 307-308 (NS) the chain is on the lumenal side. The helical transmembrane segment at 309–323 (MILGSLLISFNLSVL) threads the bilayer. The Cytoplasmic portion of the chain corresponds to 324 to 338 (IVRKLQKNLKTGSFL). Residues 339–359 (TRIWKLLLHLLLVFCLTLFLN) form a helical membrane-spanning segment. Residues 360–414 (NIIKKVLNLKSDEHIFKFLKAKFGFGATRDFDANLYLCEEAFGLLPLNTFQRLSE) are Lumenal-facing. Residues 415–437 (TLLFYAYMFVLVVTVVTASVVAF) traverse the membrane as a helical segment. Over 438-465 (HNLSDSTSLKSMDQTRKRAVDLKPEAAY) the chain is Cytoplasmic. Residues 466–485 (NLIHTILFGVLALSTMRMKY) form a helical membrane-spanning segment. The Lumenal portion of the chain corresponds to 486 to 487 (LW). A helical membrane pass occupies residues 488–499 (TSHMCVFASFGL). At 500–522 (CSSEVWELLLRLVHLCNPKRIWV) the chain is on the cytoplasmic side. Residues 523-539 (LRYLVPVLTLLYLCYKS) traverse the membrane as a helical segment. At 540–716 (WPGVMDELSE…FHVYKLSRNK (177 aa)) the chain is on the lumenal side. A glycan (N-linked (GlcNAc...) asparagine) is linked at Asn-704.

Belongs to the dpy-19 family.

The protein localises to the endoplasmic reticulum membrane. The catalysed reaction is L-tryptophyl-[protein] + a di-trans,poly-cis-dolichyl beta-D-mannosyl phosphate = C-alpha-D-mannosyl-L-tryptophyl-[protein] + a di-trans,poly-cis-dolichyl phosphate + H(+). It participates in protein modification; protein glycosylation. In terms of biological role, C-mannosyltransferase that mediates C-mannosylation of tryptophan residues on target proteins. The reaction occurs on the luminal side of the endoplasmic reticulum and involves the transfer of a mannose unit from a dolichylphosphate mannose (Dol-P-Man) donor to an acceptor protein containing a WxxW or WxxC consensus sequence. C-mannosylates RSPO1, a Wnt signaling regulator, preferentially at the first Trp residue in the sequence WxxW. C-mannosylates the netrin receptor UNC5A, preferentially at the third tryptophan of WxxWxxWxxC sequence. The chain is Protein C-mannosyl-transferase DPY19L3 (Dpy19l3) from Mus musculus (Mouse).